The sequence spans 271 residues: Phosphatidylglycerol--prolipoprotein diacylglyceryl transferase (271 aa).

7 helical membrane-spanning segments follow: residues Ile-21 to Ala-41, Leu-60 to Tyr-80, Val-95 to Trp-115, Phe-124 to Leu-144, Ser-176 to Ile-196, Gly-203 to Val-223, and Leu-230 to Gly-250. A 1,2-diacyl-sn-glycero-3-phospho-(1'-sn-glycerol) is bound at residue Arg-143.

It belongs to the Lgt family.

The protein localises to the cell inner membrane. It catalyses the reaction L-cysteinyl-[prolipoprotein] + a 1,2-diacyl-sn-glycero-3-phospho-(1'-sn-glycerol) = an S-1,2-diacyl-sn-glyceryl-L-cysteinyl-[prolipoprotein] + sn-glycerol 1-phosphate + H(+). It functions in the pathway protein modification; lipoprotein biosynthesis (diacylglyceryl transfer). Catalyzes the transfer of the diacylglyceryl group from phosphatidylglycerol to the sulfhydryl group of the N-terminal cysteine of a prolipoprotein, the first step in the formation of mature lipoproteins. The chain is Phosphatidylglycerol--prolipoprotein diacylglyceryl transferase from Vibrio vulnificus (strain YJ016).